A 316-amino-acid polypeptide reads, in one-letter code: Protease HtpX homolog (316 aa).

Residues 16–36 (LFMGAGFLIGGATGMMIALVF) traverse the membrane as a helical segment. Position 134 (histidine 134) interacts with Zn(2+). The active site involves glutamate 135. A Zn(2+)-binding site is contributed by histidine 138. A run of 2 helical transmembrane segments spans residues 149–169 (VTAT…FFGG) and 180–200 (LGGM…AMLV). Position 209 (glutamate 209) interacts with Zn(2+). The tract at residues 295-316 (PVMAATTSSSVPLSGERGGPWS) is disordered.

The protein belongs to the peptidase M48B family. Zn(2+) serves as cofactor.

It localises to the cell inner membrane. The chain is Protease HtpX homolog from Caulobacter vibrioides (strain ATCC 19089 / CIP 103742 / CB 15) (Caulobacter crescentus).